The chain runs to 65 residues: Large ribosomal subunit protein bL35 (65 aa).

The span at 1 to 11 (MPKIKTRRSAA) shows a compositional bias: basic residues. Disordered stretches follow at residues 1 to 24 (MPKI…KFKR) and 41 to 65 (RMRL…MPYA).

Belongs to the bacterial ribosomal protein bL35 family.

This Nitratidesulfovibrio vulgaris (strain DSM 19637 / Miyazaki F) (Desulfovibrio vulgaris) protein is Large ribosomal subunit protein bL35.